The following is a 771-amino-acid chain: DNA polymerase 1 (771 aa).

It belongs to the DNA polymerase type-B family.

The catalysed reaction is DNA(n) + a 2'-deoxyribonucleoside 5'-triphosphate = DNA(n+1) + diphosphate. The polypeptide is DNA polymerase 1 (polI) (Pyrococcus abyssi (strain GE5 / Orsay)).